Reading from the N-terminus, the 101-residue chain is MGTRYFLVGFLILLVLGFEVQGAHVPQQDEASSPALLTQVQESLLGYWDTAKAAAQKLYKKTYLPAVDEKIRDIYSKSTAAVTTYAGIITDQVFSVLSGKD.

Positions 1–22 (MGTRYFLVGFLILLVLGFEVQG) are cleaved as a signal peptide. The interval 66 to 74 (AVDEKIRDI) is lipid binding. Positions 78–101 (STAAVTTYAGIITDQVFSVLSGKD) are lipoprotein lipase cofactor.

Belongs to the apolipoprotein C2 family. In terms of processing, proapolipoprotein C-II is synthesized as a sialic acid containing glycoprotein which is subsequently desialylated prior to its proteolytic processing. Post-translationally, proapolipoprotein C-II undergoes proteolytic cleavage of its N-terminal hexapeptide to generate apolipoprotein C-II. In bovine, proapolipoprotein C-II was found to be the minor form whereas apolipoprotein C-II was found to be the major form in plasma.

It localises to the secreted. Component of chylomicrons, very low-density lipoproteins (VLDL), low-density lipoproteins (LDL), and high-density lipoproteins (HDL) in plasma. Plays an important role in lipoprotein metabolism as an activator of lipoprotein lipase. Both proapolipoprotein C-II and apolipoprotein C-II can activate lipoprotein lipase. This is Apolipoprotein C-II (APOC2) from Bos taurus (Bovine).